The sequence spans 373 residues: RNA 3'-terminal phosphate cyclase-like protein (373 aa).

This sequence belongs to the RNA 3'-terminal cyclase family. Type 2 subfamily. Part of the small subunit (SSU) processome, composed of more than 70 proteins and the RNA chaperone small nucleolar RNA (snoRNA) U3. Interacts with BMS1.

The protein resides in the nucleus. The protein localises to the nucleolus. Functionally, as part of the small subunit (SSU) processome, it plays a role in 40S-ribosomal-subunit biogenesis in the early pre-rRNA processing steps at sites A0, A1 and A2 that are required for proper maturation of the 18S RNA. Activates BMS1 by promoting GDP/GTP exchange. Does not have cyclase activity. This chain is RNA 3'-terminal phosphate cyclase-like protein (Rcl1), found in Mus musculus (Mouse).